Consider the following 383-residue polypeptide: D-aspartate oxidase 3 (383 aa).

The first 17 residues, 1 to 17 (MLYALLLLFGGVSTVSS), serve as a signal peptide directing secretion. FAD-binding residues include Lys-56 and Ser-63. N-linked (GlcNAc...) asparagine glycosylation is found at Asn-152, Asn-271, and Asn-320. FAD is bound at residue Thr-339. Asn-371 carries N-linked (GlcNAc...) asparagine glycosylation.

It belongs to the DAMOX/DASOX family. FAD serves as cofactor. In terms of tissue distribution, in both sexes, present in coelomocytes (at protein level). Expressed in hypodermal cells and the proximal gonadal sheath cells in adult hermaphrodites (at protein level). Also expressed in probable head mesodermal cells and unidentified cells in the head, and vulval muscles in adult hermaphrodites. Expressed in the seminal vesicle, spicule and tail cells in adult males (at protein level).

The protein localises to the secreted. The catalysed reaction is D-aspartate + O2 + H2O = oxaloacetate + H2O2 + NH4(+). The enzyme catalyses D-glutamate + O2 + H2O = H2O2 + 2-oxoglutarate + NH4(+). In terms of biological role, selectively catalyzes the oxidative deamination of acidic amino acids. Plays a role in the egg-laying events and maturation processes of the reproductive organs. This is D-aspartate oxidase 3 (ddo-3) from Caenorhabditis elegans.